Consider the following 385-residue polypeptide: uncharacterized protein (385 aa).

Belongs to the phage portal family. HK97 subfamily.

This is an uncharacterized protein from Rickettsia felis (strain ATCC VR-1525 / URRWXCal2) (Rickettsia azadi).